The sequence spans 296 residues: Phosphatidylglycerol--prolipoprotein diacylglyceryl transferase (296 aa).

Positions 1 to 21 are disordered; sequence MRHRRRPGGRSTAGGTPVSQL. A run of 7 helical transmembrane segments spans residues 34–54, 72–92, 108–128, 136–158, 195–215, 227–243, and 258–278; these read GPLTIHIYALCILAGIVVAYI, ELCALAVIAGIIGGRLYHVIT, FFIWQGGLGIWGAISLGGLAI, GIRFASVADSLAPGILAAQAIGR, FHPTFLYELVWSLVGAVFLLW, LFTLYVAIYTFGRFWVE, and LNDVTALVVFTGAVVILIVLQ. R158 provides a ligand contact to a 1,2-diacyl-sn-glycero-3-phospho-(1'-sn-glycerol).

The protein belongs to the Lgt family.

It is found in the cell membrane. The enzyme catalyses L-cysteinyl-[prolipoprotein] + a 1,2-diacyl-sn-glycero-3-phospho-(1'-sn-glycerol) = an S-1,2-diacyl-sn-glyceryl-L-cysteinyl-[prolipoprotein] + sn-glycerol 1-phosphate + H(+). It functions in the pathway protein modification; lipoprotein biosynthesis (diacylglyceryl transfer). Functionally, catalyzes the transfer of the diacylglyceryl group from phosphatidylglycerol to the sulfhydryl group of the N-terminal cysteine of a prolipoprotein, the first step in the formation of mature lipoproteins. This Cutibacterium acnes (strain DSM 16379 / KPA171202) (Propionibacterium acnes) protein is Phosphatidylglycerol--prolipoprotein diacylglyceryl transferase.